The primary structure comprises 282 residues: Homeobox protein vex1 (282 aa).

Positions 129–188 (ASRARTKFTAEQLEELEKSFKENRYIGSSEKRRLSKVLKLSENQIKTWFQNRRMKFKRQT) form a DNA-binding region, homeobox.

The protein localises to the nucleus. Functionally, transcriptional repressor. Acts in a ventral signaling pathway downstream of bmp4 to antagonize the Spemann organizer and ventrally pattern the embryonic mesoderm. Represses transcription of the dorsal genes gsc and otx2. The sequence is that of Homeobox protein vex1 from Xenopus tropicalis (Western clawed frog).